Here is a 426-residue protein sequence, read N- to C-terminus: Pistil-specific extensin-like protein (426 aa).

An N-terminal signal peptide occupies residues 1–23 (MAVIISSKVLLIQLFVLVLGSFS). 2 disordered regions span residues 56-109 (GPTF…GSKL) and 121-254 (NLPD…AAEP). Composition is skewed to pro residues over residues 60-94 (VLPP…PLIP), 123-161 (PDVP…PSPP), 168-224 (PPQP…PPPP), and 231-254 (LLPP…AAEP). 3 tandem repeats follow at residues 69–73 (SPPPP), 76–80 (SPPPP), and 83–87 (SPPPP). A 4 X 5 AA repeats of S-P(4) region spans residues 69-182 (SPPPPSPSPP…PAKQPSPPPP (114 aa)). The stretch at 178–182 (SPPPP) is repeat 4. Asn-310 is a glycosylation site (N-linked (GlcNAc...) asparagine).

As to expression, pistil (stigma and style tissue).

The sequence is that of Pistil-specific extensin-like protein from Nicotiana tabacum (Common tobacco).